The chain runs to 376 residues: Penicillin V acylase (376 aa).

The first 29 residues, M1–A29, serve as a signal peptide directing secretion. The active-site Nucleophile is the C30.

Belongs to the peptidase C59 family. As to quaternary structure, homotetramer. Dimer of dimers.

Its subcellular location is the periplasm. The catalysed reaction is a penicillin + H2O = 6-aminopenicillanate + a carboxylate. Exhibits uncharacteristic kinetic behavior, showing positive cooperativity coupled with substrate inhibition. Penicillin acylase activity is enhanced in the presence of the reducing agent DTT, indicating active sulfhydryl group in the enzyme. Also shows enhanced activity in presence of organic solvents and detergents. Inhibited largely in presence of Ag(+), Hg(2+) and Cd(2+) ions, which have strong affinities for sulfhydryl groups. Activity is also inhibited by bile salts. In terms of biological role, catalyzes the hydrolysis of penicillin V to 6-aminopenicillanate (6-APA). Shows high specificity towards penicillin V. Can use other beta-lactam substrates, including penicillin G, ampicillin, cephalexin, cloxacillin and dicloxacillin, but at a rate less than 10% of that of penicillin V. Does not show any activity with glyco- or tauro-conjugated bile salts. This chain is Penicillin V acylase, found in Pectobacterium atrosepticum (strain SCRI 1043 / ATCC BAA-672) (Erwinia carotovora subsp. atroseptica).